The sequence spans 216 residues: Protein-L-isoaspartate O-methyltransferase (216 aa).

Residue S66 is part of the active site.

Belongs to the methyltransferase superfamily. L-isoaspartyl/D-aspartyl protein methyltransferase family.

Its subcellular location is the cytoplasm. The enzyme catalyses [protein]-L-isoaspartate + S-adenosyl-L-methionine = [protein]-L-isoaspartate alpha-methyl ester + S-adenosyl-L-homocysteine. Catalyzes the methyl esterification of L-isoaspartyl residues in peptides and proteins that result from spontaneous decomposition of normal L-aspartyl and L-asparaginyl residues. It plays a role in the repair and/or degradation of damaged proteins. The chain is Protein-L-isoaspartate O-methyltransferase from Colwellia psychrerythraea (strain 34H / ATCC BAA-681) (Vibrio psychroerythus).